Reading from the N-terminus, the 258-residue chain is tRNA pseudouridine synthase A (258 aa).

The Nucleophile role is filled by Asp-52. Substrate is bound at residue Tyr-110.

The protein belongs to the tRNA pseudouridine synthase TruA family. In terms of assembly, homodimer.

It carries out the reaction uridine(38/39/40) in tRNA = pseudouridine(38/39/40) in tRNA. In terms of biological role, formation of pseudouridine at positions 38, 39 and 40 in the anticodon stem and loop of transfer RNAs. The protein is tRNA pseudouridine synthase A of Francisella philomiragia subsp. philomiragia (strain ATCC 25017 / CCUG 19701 / FSC 153 / O#319-036).